A 280-amino-acid chain; its full sequence is MRPAIKVGLSTASVYPLRAEAAFEYADRLGYDGVELMVWGESVSQDIDAVRKLSRRYRVPVLSVHAPCLLISQRVWGANPILKLDRSVRAAEQLGAQTVVVHPPFRWQRRYAEGFSDQVAALEAASTVMVAVENMFPFRADRFFGAGQSRERMRKRGGGPGPAISAFAPSYDPLDGNHAHYTLDLSHTATAGTDSLDMARRMGPGLVHLHLCDGSGLPADEHLVPGRGTQPTAEVCQMLAGSGFVGHVVLEVSTSSARSANERESMLAESLQFARTHLLR.

The N-terminal stretch at 1 to 21 (MRPAIKVGLSTASVYPLRAEA) is a signal peptide.

To M.leprae ML2432 and S.coelicolor SCO3347.

This is an uncharacterized protein from Mycobacterium tuberculosis (strain CDC 1551 / Oshkosh).